The sequence spans 694 residues: NADPH--cytochrome P450 reductase (694 aa).

The Lumenal segment spans residues 1–8; that stretch reads MAQLDTLD. A helical transmembrane segment spans residues 9–31; that stretch reads LVVLAVLLVGSVAYFTKGTYWAV. Over 32 to 694 the chain is Cytoplasmic; sequence AKDPYASTGP…RGRYQEDVWS (663 aa). One can recognise a Flavodoxin-like domain in the interval 66–220; sequence CVIFYGSQTG…DFLAWKEPMW (155 aa). FMN contacts are provided by residues 72-77, 123-126, 168-177, and D203; these read SQTGTA, ATYG, and LGNNTYEHYN. Positions 276-537 constitute an FAD-binding FR-type domain; that stretch reads HNPFIAPIAE…HVRHSNFKLP (262 aa). An NADP(+)-binding site is contributed by R295. Residues 450-453, 468-470, and 485-488 each bind FAD; these read RYYS, TAV, and GVTT. NADP(+) is bound by residues T551, 613–614, 619–623, and E655; these read SR and KVYVQ. Residue W693 coordinates FAD.

The protein belongs to the NADPH--cytochrome P450 reductase family. It in the N-terminal section; belongs to the flavodoxin family. This sequence in the C-terminal section; belongs to the flavoprotein pyridine nucleotide cytochrome reductase family. Requires FAD as cofactor. The cofactor is FMN.

Its subcellular location is the endoplasmic reticulum membrane. The protein localises to the mitochondrion outer membrane. It is found in the cell membrane. It carries out the reaction 2 oxidized [cytochrome P450] + NADPH = 2 reduced [cytochrome P450] + NADP(+) + H(+). Functionally, this enzyme is required for electron transfer from NADP to cytochrome P450 in microsomes. It can also provide electron transfer to heme oxygenase and cytochrome B5. Involved in ergosterol biosynthesis. In Aspergillus niger, this protein is NADPH--cytochrome P450 reductase.